We begin with the raw amino-acid sequence, 339 residues long: MNIGIVNDLPLAVEALRRVLALRTDHRVLWVATDGDEAVDFCVAHPPDLVLMDLVMPKVDGVAATRRIMARAPCAILVVTASVSANTSSVYEAMGAGALDAVDTPTLALGLSTDASPQALLAKIDQIGRLLESRTAALVPPGPAPERGQPTLVAIGASAGGPTALTALLRALPADFPAAIVIVQHVDQAFALGMAEWLDGYTRLPVRVARQGSVPQPGEVLLAATNDHLYLSPRGVLGYTRHPVETPYRPSIDVFFNSVADGWQGEAFGVLLTGMGRDGALGLKAMRAKGCYTIAQDEATSAVYGMPKAAAAIGAASAILPLERIAPQLISRITRPLRD.

The Response regulatory domain maps to 2–119 (NIGIVNDLPL…GLSTDASPQA (118 aa)). Position 53 is a 4-aspartylphosphate (D53). Residues 141–336 (PGPAPERGQP…PQLISRITRP (196 aa)) enclose the CheB-type methylesterase domain. Active-site residues include S158, H185, and D278.

It belongs to the CheB family. Post-translationally, phosphorylated by CheA. Phosphorylation of the N-terminal regulatory domain activates the methylesterase activity.

The protein localises to the cytoplasm. It catalyses the reaction [protein]-L-glutamate 5-O-methyl ester + H2O = L-glutamyl-[protein] + methanol + H(+). The catalysed reaction is L-glutaminyl-[protein] + H2O = L-glutamyl-[protein] + NH4(+). Its function is as follows. Involved in chemotaxis. Part of a chemotaxis signal transduction system that modulates chemotaxis in response to various stimuli. Catalyzes the demethylation of specific methylglutamate residues introduced into the chemoreceptors (methyl-accepting chemotaxis proteins or MCP) by CheR. Also mediates the irreversible deamidation of specific glutamine residues to glutamic acid. This Burkholderia lata (strain ATCC 17760 / DSM 23089 / LMG 22485 / NCIMB 9086 / R18194 / 383) protein is Protein-glutamate methylesterase/protein-glutamine glutaminase 2.